The chain runs to 1157 residues: Pesticidal crystal protein Cry9Ca (1157 aa).

The protein belongs to the delta endotoxin family.

In terms of biological role, promotes colloidosmotic lysis by binding to the midgut epithelial cells of Lepidoptera larvae. Has a fairly broad spectrum of activity against members of the Pyralidae, Plutellidae, Sphingidae and Noctuidae families. It was the first insecticidal crystal protein characterized with activity against cutworms. No activity is observed against some beetles, such as the Colorado potato beetle. This is Pesticidal crystal protein Cry9Ca (cry9Ca) from Bacillus thuringiensis subsp. tolworthi.